Reading from the N-terminus, the 351-residue chain is F-box protein At1g47810 (351 aa).

In terms of domain architecture, F-box spans 8–54; that stretch reads LQSLDPIPVDVLFEIFLNLPAKFLARFVCVSKLWAKIIRNQDFIRSF.

The protein is F-box protein At1g47810 of Arabidopsis thaliana (Mouse-ear cress).